A 207-amino-acid chain; its full sequence is Varv peptide A/Kalata-B1 (207 aa).

An N-terminal signal peptide occupies residues 1-20 (MKMFIVLVLSAAFALPAAFA). Residues 21-66 (TEQDVITLQAYEELLKNGAANGMTKTVISSPVLEEALVSYSKNKLG) constitute a propeptide that is removed on maturation. Positions 67 to 95 (GLPVCGETCVGGTCNTPGCSCSWPVCTRN) form a cross-link, cyclopeptide (Gly-Asn). 3 disulfides stabilise this stretch: Cys71–Cys85, Cys75–Cys87, and Cys80–Cys92. The propeptide occupies 96 to 120 (SLESTKSANPLLEEALTAFAKKGLG). The cyclopeptide (Gly-Asn) cross-link spans 121–149 (GLPVCGETCVGGTCNTPGCTCSWPVCTRN). 3 disulfides stabilise this stretch: Cys125-Cys139, Cys129-Cys141, and Cys134-Cys146. A propeptide spanning residues 150 to 174 (ALETQKPNHLLEEALVAFAKKGNLG) is cleaved from the precursor. The cyclopeptide (Gly-Asn) cross-link spans 175–203 (GLPVCGETCVGGTCNTPGCSCSWPVCTRN). Cystine bridges form between Cys179-Cys193, Cys183-Cys195, and Cys188-Cys200. Positions 204 to 207 (ALAM) are excised as a propeptide.

The protein belongs to the cyclotide family. Moebius subfamily. In terms of processing, varv peptide A and kalata-B1 are cyclic peptides.

Probably participates in a plant defense mechanism. Has hemolytic activity. The protein is Varv peptide A/Kalata-B1 of Viola odorata (Sweet violet).